The primary structure comprises 730 residues: UvrABC system protein C (730 aa).

The region spanning 16–95 is the GIY-YIG domain; it reads AAPGVYKFRD…IKEFDPRFNV (80 aa). The UVR domain maps to 208 to 243; that stretch reads DKLVKDLEKRMQQASEDLDFETAARLRDDIGALRKA. Residues 678 to 730 form a disordered region; the sequence is ARALPAAVGDDELDKESESSVTSADAPSAESGSGDEGSESRELSMPTTGPSAQ.

This sequence belongs to the UvrC family. As to quaternary structure, interacts with UvrB in an incision complex.

Its subcellular location is the cytoplasm. Its function is as follows. The UvrABC repair system catalyzes the recognition and processing of DNA lesions. UvrC both incises the 5' and 3' sides of the lesion. The N-terminal half is responsible for the 3' incision and the C-terminal half is responsible for the 5' incision. This is UvrABC system protein C from Rhodococcus erythropolis (strain PR4 / NBRC 100887).